The sequence spans 268 residues: Tetraspanin-5 (268 aa).

The Cytoplasmic segment spans residues 1–17 (MSGKHYKGPEVSCCIKY). Residues 18–38 (FIFGFNVIFWFLGITFLGIGL) form a helical membrane-spanning segment. Topologically, residues 39-61 (WAWNEKGVLSNISSITDLGGFDP) are extracellular. An N-linked (GlcNAc...) asparagine glycan is attached at Asn-49. Residues 62–82 (VWLFLVVGGVMFILGFAGCIG) traverse the membrane as a helical segment. Residues 83–92 (ALRENTFLLK) are Cytoplasmic-facing. Residues 93–113 (FFSVFLGIIFFLELTAGVLAF) traverse the membrane as a helical segment. The Extracellular portion of the chain corresponds to 114-232 (VFKDWIKDQL…PQFEKWLQDN (119 aa)). 4 disulfide bridges follow: Cys-153-Cys-221, Cys-154-Cys-186, Cys-170-Cys-180, and Cys-187-Cys-200. Residues Asn-169 and Asn-174 are each glycosylated (N-linked (GlcNAc...) asparagine). N-linked (GlcNAc...) asparagine glycosylation is present at Asn-232. Residues 233–253 (LTIVAGIFIGIALLQIFGICL) traverse the membrane as a helical segment. Topologically, residues 254-268 (AQNLVSDIEAVRASW) are cytoplasmic.

This sequence belongs to the tetraspanin (TM4SF) family. In terms of assembly, interacts with ADAM10; the interaction influences ADAM10 substrate specificity, endocytosis and turnover. In terms of processing, palmitoylated.

It is found in the cell membrane. Its function is as follows. Part of TspanC8 subgroup, composed of 6 members that interact with the transmembrane metalloprotease ADAM10. This interaction is required for ADAM10 exit from the endoplasmic reticulum and for enzymatic maturation and trafficking to the cell surface as well as substrate specificity. Different TspanC8/ADAM10 complexes have distinct substrates. Promotes ADAM10-mediated cleavage of CD44. Seems to regulate VE-cadherin expression in endothelial cells probably through interaction with ADAM10, promoting leukocyte transmigration. The protein is Tetraspanin-5 of Homo sapiens (Human).